A 307-amino-acid chain; its full sequence is UDP-N-acetylenolpyruvoylglucosamine reductase (307 aa).

Residues 33–197 (TGGNADFYIT…LEAAFTLAPG (165 aa)) enclose the FAD-binding PCMH-type domain. Residue Arg176 is part of the active site. Ser226 (proton donor) is an active-site residue. Glu296 is a catalytic residue.

The protein belongs to the MurB family. FAD is required as a cofactor.

The protein localises to the cytoplasm. It catalyses the reaction UDP-N-acetyl-alpha-D-muramate + NADP(+) = UDP-N-acetyl-3-O-(1-carboxyvinyl)-alpha-D-glucosamine + NADPH + H(+). It functions in the pathway cell wall biogenesis; peptidoglycan biosynthesis. Its function is as follows. Cell wall formation. The chain is UDP-N-acetylenolpyruvoylglucosamine reductase from Staphylococcus aureus (strain MRSA252).